The following is a 485-amino-acid chain: Glutamyl-tRNA(Gln) amidotransferase subunit A (485 aa).

Residues lysine 79 and serine 154 each act as charge relay system in the active site. Serine 178 functions as the Acyl-ester intermediate in the catalytic mechanism.

It belongs to the amidase family. GatA subfamily. As to quaternary structure, heterotrimer of A, B and C subunits.

The enzyme catalyses L-glutamyl-tRNA(Gln) + L-glutamine + ATP + H2O = L-glutaminyl-tRNA(Gln) + L-glutamate + ADP + phosphate + H(+). In terms of biological role, allows the formation of correctly charged Gln-tRNA(Gln) through the transamidation of misacylated Glu-tRNA(Gln) in organisms which lack glutaminyl-tRNA synthetase. The reaction takes place in the presence of glutamine and ATP through an activated gamma-phospho-Glu-tRNA(Gln). The chain is Glutamyl-tRNA(Gln) amidotransferase subunit A from Geobacillus stearothermophilus (Bacillus stearothermophilus).